A 1183-amino-acid chain; its full sequence is Phospholipid-transporting ATPase FetA (1183 aa).

Transmembrane regions (helical) follow at residues 96 to 116, 299 to 319, and 348 to 368; these read ISSLAWYTTVIPLIVVLSITG, VLVVWIFMFLGGMCFLLSIGH, and ALIFWSYFIVLNTMVPISLYV. Catalysis depends on Asp-416, which acts as the 4-aspartylphosphate intermediate. The ATP site is built by Asp-416, Lys-417, Thr-418, Glu-519, Phe-560, Lys-583, Arg-617, Thr-697, Gly-698, Asp-699, Arg-812, and Lys-818. Asp-416 provides a ligand contact to Mg(2+). Thr-418 serves as a coordination point for Mg(2+). Asp-838 serves as a coordination point for Mg(2+). Residues Asn-841 and Asp-842 each coordinate ATP. Asp-842 serves as a coordination point for Mg(2+). 6 helical membrane-spanning segments follow: residues 904–924, 927–947, 981–1001, 1014–1034, 1049–1069, and 1090–1110; these read FAFTLVHFWYAFFNGFSAQTV, IWFITFYNLIYTSLPVLGLSL, CLLHGIYNSFVLFFVPMGTVF, FQSFSLLVQTTLIGVMTMQIA, WGSLGLYFCILILLCSDGLCL, and IWLCLILSTILCMIPLIGYNF.

This sequence belongs to the cation transport ATPase (P-type) (TC 3.A.3) family. Type IV subfamily. Mg(2+) is required as a cofactor. In terms of tissue distribution, highly expressed in testis.

Its subcellular location is the cytoplasmic vesicle. The protein localises to the secretory vesicle. It localises to the acrosome membrane. It catalyses the reaction ATP + H2O + phospholipidSide 1 = ADP + phosphate + phospholipidSide 2.. Functionally, P4-ATPase flippase which catalyzes the hydrolysis of ATP coupled to the transport of aminophospholipids from the outer to the inner leaflet of various membranes and ensures the maintenance of asymmetric distribution of phospholipids. Phospholipid translocation also seems to be implicated in vesicle formation and in uptake of lipid signaling molecules. May play a role in phospholid transport across membranes and in acrosome formation. This Mus musculus (Mouse) protein is Phospholipid-transporting ATPase FetA (Atp8b5).